Consider the following 339-residue polypeptide: Dihydroorotase (339 aa).

Zn(2+) is bound by residues His-12 and His-14. Substrate is bound by residues 14–16 and Asn-40; that span reads HVR. Residues Lys-94, His-133, His-167, and Asp-239 each coordinate Zn(2+). Lys-94 bears the N6-carboxylysine mark. Substrate is bound at residue His-133. Asp-239 is an active-site residue. The substrate site is built by His-243 and Ala-255.

This sequence belongs to the metallo-dependent hydrolases superfamily. DHOase family. Class II DHOase subfamily. In terms of assembly, homodimer. Zn(2+) is required as a cofactor.

The catalysed reaction is (S)-dihydroorotate + H2O = N-carbamoyl-L-aspartate + H(+). Its pathway is pyrimidine metabolism; UMP biosynthesis via de novo pathway; (S)-dihydroorotate from bicarbonate: step 3/3. Catalyzes the reversible cyclization of carbamoyl aspartate to dihydroorotate. In Helicobacter acinonychis (strain Sheeba), this protein is Dihydroorotase.